The following is a 399-amino-acid chain: Transcription factor UNE10 (399 aa).

Disordered stretches follow at residues 119–158 and 173–228; these read QSKPGGVGSTRVGSCSDGRTMGGGKRARVAPEWSGGGSQR and MGSH…RRDK. Over residues 178–201 the composition is skewed to basic and acidic residues; the sequence is NTIDDHDSVCHSRPQMEDEEEKKA. The bHLH domain occupies 213–262; the sequence is RAAAIHNQSERKRRDKINQRMKTLQKLVPNSSKTDKASMLDEVIEYLKQL.

Homodimer. Associates to PTAC12/HMR/PAP5 which acts as a transcriptional coactivator. Interacts with the Pfr form of phyB but barely with that of phyA. Binds to COP1. Post-translationally, ubiquitinated and subsequently targeted to protein degradation by COP1 in the dark, but not in far-red light. As to expression, mainly expressed in stems, leaves, seedlings, fruits and flowers, and, to a lower extent, in roots.

The protein localises to the nucleus. Its activity is regulated as follows. Stabilized by phyA but destabilized by phyB. Accumulates in the dark but not in far-red light upon MG132 treatment, a 26S proteasome inhibitor (at protein level). Transcription factor binding to G-box elements (5'-CACGTG-3') in target genes promoters, particularly in far-red light but barely in the dark. Required during the fertilization of ovules by pollen. Repressor of phytochrome A-mediated far-red light responses including seed germination, suppression of hypocotyl elongation, and randomization of hypocotyl growth orientation. Does not inhibit phyB-induced red light responses. The chain is Transcription factor UNE10 from Arabidopsis thaliana (Mouse-ear cress).